The chain runs to 228 residues: Phosphoribosylformylglycinamidine synthase subunit PurQ (228 aa).

One can recognise a Glutamine amidotransferase type-1 domain in the interval 2 to 225 (KAAVISFPGS…INQTEGADVR (224 aa)). Cys86 serves as the catalytic Nucleophile. Active-site residues include His194 and Glu196.

In terms of assembly, part of the FGAM synthase complex composed of 1 PurL, 1 PurQ and 2 PurS subunits.

The protein resides in the cytoplasm. The catalysed reaction is N(2)-formyl-N(1)-(5-phospho-beta-D-ribosyl)glycinamide + L-glutamine + ATP + H2O = 2-formamido-N(1)-(5-O-phospho-beta-D-ribosyl)acetamidine + L-glutamate + ADP + phosphate + H(+). It catalyses the reaction L-glutamine + H2O = L-glutamate + NH4(+). Its pathway is purine metabolism; IMP biosynthesis via de novo pathway; 5-amino-1-(5-phospho-D-ribosyl)imidazole from N(2)-formyl-N(1)-(5-phospho-D-ribosyl)glycinamide: step 1/2. In terms of biological role, part of the phosphoribosylformylglycinamidine synthase complex involved in the purines biosynthetic pathway. Catalyzes the ATP-dependent conversion of formylglycinamide ribonucleotide (FGAR) and glutamine to yield formylglycinamidine ribonucleotide (FGAM) and glutamate. The FGAM synthase complex is composed of three subunits. PurQ produces an ammonia molecule by converting glutamine to glutamate. PurL transfers the ammonia molecule to FGAR to form FGAM in an ATP-dependent manner. PurS interacts with PurQ and PurL and is thought to assist in the transfer of the ammonia molecule from PurQ to PurL. The polypeptide is Phosphoribosylformylglycinamidine synthase subunit PurQ (Lacticaseibacillus paracasei (strain ATCC 334 / BCRC 17002 / CCUG 31169 / CIP 107868 / KCTC 3260 / NRRL B-441) (Lactobacillus paracasei)).